Consider the following 670-residue polypeptide: DNA ligase (670 aa).

NAD(+) contacts are provided by residues 32-36 (DAEYD), 81-82 (SL), and Glu-113. The active-site N6-AMP-lysine intermediate is the Lys-115. Positions 136, 173, 290, and 314 each coordinate NAD(+). Zn(2+) contacts are provided by Cys-408, Cys-411, Cys-426, and Cys-432. The region spanning 592-670 (EIDSPFAGKT…EAEMIRLLGE (79 aa)) is the BRCT domain.

It belongs to the NAD-dependent DNA ligase family. LigA subfamily. Requires Mg(2+) as cofactor. Mn(2+) is required as a cofactor.

It carries out the reaction NAD(+) + (deoxyribonucleotide)n-3'-hydroxyl + 5'-phospho-(deoxyribonucleotide)m = (deoxyribonucleotide)n+m + AMP + beta-nicotinamide D-nucleotide.. Functionally, DNA ligase that catalyzes the formation of phosphodiester linkages between 5'-phosphoryl and 3'-hydroxyl groups in double-stranded DNA using NAD as a coenzyme and as the energy source for the reaction. It is essential for DNA replication and repair of damaged DNA. The protein is DNA ligase of Yersinia pseudotuberculosis serotype O:1b (strain IP 31758).